Here is a 901-residue protein sequence, read N- to C-terminus: Protein translocase subunit SecA (901 aa).

Residues Gln87, 105-109 (GEGKT), and Asp512 contribute to the ATP site. The segment at 852–901 (AQMQQLSHQSDDEAAAQDLAAQTGERKVGRNDPCPCGSGKKYKQCHGRLS) is disordered. Zn(2+) contacts are provided by Cys885, Cys887, Cys896, and His897. Residues 891–901 (KKYKQCHGRLS) are compositionally biased toward basic residues.

It belongs to the SecA family. As to quaternary structure, monomer and homodimer. Part of the essential Sec protein translocation apparatus which comprises SecA, SecYEG and auxiliary proteins SecDF-YajC and YidC. Zn(2+) is required as a cofactor.

It is found in the cell inner membrane. It localises to the cytoplasm. The catalysed reaction is ATP + H2O + cellular proteinSide 1 = ADP + phosphate + cellular proteinSide 2.. In terms of biological role, part of the Sec protein translocase complex. Interacts with the SecYEG preprotein conducting channel. Has a central role in coupling the hydrolysis of ATP to the transfer of proteins into and across the cell membrane, serving both as a receptor for the preprotein-SecB complex and as an ATP-driven molecular motor driving the stepwise translocation of polypeptide chains across the membrane. This Klebsiella pneumoniae subsp. pneumoniae (strain ATCC 700721 / MGH 78578) protein is Protein translocase subunit SecA.